Here is a 227-residue protein sequence, read N- to C-terminus: Ribonuclease 3 (227 aa).

The 126-residue stretch at 7–132 folds into the RNase III domain; that stretch reads LTAFMDRLGY…VIAAVYLDGG (126 aa). Position 45 (glutamate 45) interacts with Mg(2+). Aspartate 49 is an active-site residue. 2 residues coordinate Mg(2+): aspartate 118 and glutamate 121. Residue glutamate 121 is part of the active site. The region spanning 157–226 is the DRBM domain; the sequence is DAKTALQEWA…AKDLLAQLAG (70 aa).

It belongs to the ribonuclease III family. As to quaternary structure, homodimer. Mg(2+) is required as a cofactor.

Its subcellular location is the cytoplasm. The enzyme catalyses Endonucleolytic cleavage to 5'-phosphomonoester.. Its function is as follows. Digests double-stranded RNA. Involved in the processing of primary rRNA transcript to yield the immediate precursors to the large and small rRNAs (23S and 16S). Processes some mRNAs, and tRNAs when they are encoded in the rRNA operon. Processes pre-crRNA and tracrRNA of type II CRISPR loci if present in the organism. In Jannaschia sp. (strain CCS1), this protein is Ribonuclease 3.